The following is a 93-amino-acid chain: Sm-like protein LSM2 (93 aa).

In terms of domain architecture, Sm spans 2–76 (LFFSYFKDLV…VRYVQLPKDG (75 aa)).

Belongs to the snRNP Sm proteins family. In terms of assembly, component of the heptameric LSM1-LSM7 complex that forms a seven-membered ring structure with a donut shape. The LSM subunits are arranged in the order LSM1, LSM2, LSM3, LSM6, LSM5, LSM7 and LSM4. LSM2 subunit interacts only with its two neighboring subunits, LSM1A or LSM1B and LSM3A or LSM3B. Component of the heptameric LSM2-LSM8 complex that forms a seven-membered ring structure with a donut shape. The LSM subunits are arranged in the order LSM8, LSM2, LSM3, LSM6, LSM5, LSM7 and LSM4. LSM2 subunit interacts only with its two neighboring subunits, LSM8 and LSM3A or LSM3B. Expressed in roots, leaves, stems, flowers and siliques.

The protein localises to the cytoplasm. Its subcellular location is the nucleus. In terms of biological role, component of LSM protein complexes, which are involved in RNA processing. Component of the cytoplasmic LSM1-LSM7 complex which is involved in mRNA degradation by promoting decapping and leading to accurate 5'-3' mRNA decay. The cytoplasmic LSM1-LSM7 complex regulates developmental gene expression by the decapping of specific development-related transcripts. Component of the nuclear LSM2-LSM8 complex which is involved splicing nuclear mRNAs. LSM2-LSM8 binds directly to the U6 small nuclear RNAs (snRNAs) and is essential for accurate splicing of selected development-related mRNAs through the stabilization of the spliceosomal U6 snRNA. Plays a critical role in the regulation of development-related gene expression. This Arabidopsis thaliana (Mouse-ear cress) protein is Sm-like protein LSM2.